We begin with the raw amino-acid sequence, 449 residues long: UNC93-like protein MFSD11 (449 aa).

The helical transmembrane segment at 8–28 (LFNIVILGVAFMFMFTAFQTC) threads the bilayer. Asn-40 carries an N-linked (GlcNAc...) asparagine glycan. The next 5 helical transmembrane spans lie at 53–73 (AIIYGVFSASNLITPSVVAIV), 74–94 (GPQISMFVSGLFYSMYIAVFI), 96–116 (PFPWSFYTASVFIGIAAAVLW), 138–158 (IFWALLQSSLFFGNLYIYFAW), and 170–190 (RTVFIALTVISLVGTVLFFLI). Residue Ser-204 is modified to Phosphoserine. A run of 6 helical transmembrane segments spans residues 239 to 259 (MLLLSVTTAYTGLELTFFSGV), 277 to 297 (LIGLSGIFIGIGEILGGSLFG), 309 to 329 (PVVLLGTLVHFVAFYLIFLNM), 359 to 379 (FLLGLGDSCFNTQLLSILGFL), 385 to 405 (APAFAVFKFVQSICAAVAFFY), and 410 to 430 (LLHWQLLVMVIFGFFGTISFF).

It belongs to the unc-93 family. Widely expressed.

The protein localises to the membrane. The chain is UNC93-like protein MFSD11 (Mfsd11) from Mus musculus (Mouse).